The primary structure comprises 555 residues: Glutamine--tRNA ligase (555 aa).

The 'HIGH' region motif lies at 34-44; the sequence is PEPNGYLHIGH. ATP-binding positions include 35 to 37 and 41 to 47; these read EPN and HIGHAKS. The L-glutamine site is built by Asp-67 and Tyr-212. ATP is bound by residues Thr-231, 261–262, and 269–271; these read RL and MSK. The 'KMSKS' region signature appears at 268 to 272; sequence VMSKR.

This sequence belongs to the class-I aminoacyl-tRNA synthetase family. As to quaternary structure, monomer.

Its subcellular location is the cytoplasm. It catalyses the reaction tRNA(Gln) + L-glutamine + ATP = L-glutaminyl-tRNA(Gln) + AMP + diphosphate. This Cronobacter sakazakii (strain ATCC BAA-894) (Enterobacter sakazakii) protein is Glutamine--tRNA ligase.